The chain runs to 775 residues: Putative ankyrin repeat protein RBE_0801 (775 aa).

6 ANK repeats span residues 66–95 (HSLP…ENTE), 300–329 (ATTV…KVEN), 331–356 (ILQE…IKSF), 357–385 (TNDY…NIVG), 447–476 (IPDV…SFDF), and 523–552 (GDDK…KQGI).

This Rickettsia bellii (strain RML369-C) protein is Putative ankyrin repeat protein RBE_0801.